The sequence spans 204 residues: Small ribosomal subunit protein uS3 (204 aa).

Residues I37–K105 enclose the KH type-2 domain.

This sequence belongs to the universal ribosomal protein uS3 family. Part of the 30S ribosomal subunit. Forms a tight complex with proteins S10 and S14.

Binds the lower part of the 30S subunit head. Binds mRNA in the 70S ribosome, positioning it for translation. The chain is Small ribosomal subunit protein uS3 from Wolbachia pipientis wMel.